Reading from the N-terminus, the 304-residue chain is DCN1-like protein 3 (304 aa).

Disordered stretches follow at residues 1-87 (MGQC…EESS) and 285-304 (VEGRGALSSGPEGLCPEEQT). G2 carries N-myristoyl glycine lipidation. The 193-residue stretch at 86–278 (SSLQRLEELF…LFDTFVEWEM (193 aa)) folds into the DCUN1 domain.

In terms of assembly, part of a complex containing DCUN1D3, CUL3 and RBX1. Interacts (via the DCUN1 domain) with the unneddylated cullins: interacts with CUL1, CUL2, CUL3, CUL4A, CUL4B and CUL5; these interactions promote the cullin neddylation and the identity of the cullin dictates the affinity of the interaction. Interacts preferentially with CUL3; this interaction triggers the relocalization of CUL3 to the cell membrane where CUL3 is neddylated. Interacts (via DCUN1 domain) with RBX1. May also interact with regulators or subunits of cullin-RING ligases such as RNF7, ELOB and DDB1; these interactions are bridged by cullins. Interacts (via DCUN1 domain) with CAND1; this interaction is bridged by cullins and strongly inhibits cullin neddylation. These CAND-cullin-DCNL complexes can only be neddylated in the presence of a substrate adapter. Interacts (via DCUN1 domain) with the N-terminally acetylated form of UBE2M and UBE2F.

The protein resides in the cell membrane. It localises to the cytoplasm. Its subcellular location is the nucleus. The protein localises to the perinuclear region. Contributes to the neddylation of all cullins by transferring NEDD8 from N-terminally acetylated NEDD8-conjugating E2s enzyme to different cullin C-terminal domain-RBX complexes and may play a role in the cell cycle progression by regulating the SCF ubiquitin E3 ligase complex, after UV damage. At the cell membrane, can promote and as well inhibit cullins neddylation. The polypeptide is DCN1-like protein 3 (Rattus norvegicus (Rat)).